The following is a 1127-amino-acid chain: Zinc finger protein basonuclin-2 (1127 aa).

Residues Ser-44–Asp-67 form a disordered region. Residues Val-49 to Asp-67 are compositionally biased toward basic and acidic residues. Lys-305 participates in a covalent cross-link: Glycyl lysine isopeptide (Lys-Gly) (interchain with G-Cter in SUMO2). Residues Ser-386–Ser-450 form a disordered region. Residues Asn-389 to Ser-400 are compositionally biased toward low complexity. The segment covering Pro-403 to Glu-422 has biased composition (polar residues). Residues Lys-424, Lys-444, and Lys-449 each participate in a glycyl lysine isopeptide (Lys-Gly) (interchain with G-Cter in SUMO2) cross-link. Residues Val-469–His-492 form a C2H2-type 1 zinc finger. Residue Ser-589 is modified to Phosphoserine. Lys-669 participates in a covalent cross-link: Glycyl lysine isopeptide (Lys-Gly) (interchain with G-Cter in SUMO2). Residues Ile-675–Leu-772 are disordered. A compositionally biased stretch (acidic residues) spans Asp-676–Asn-689. 2 stretches are compositionally biased toward basic and acidic residues: residues Met-698 to Asp-708 and Glu-747 to Leu-772. The C2H2-type 2 zinc finger occupies Lys-861–His-884. Glycyl lysine isopeptide (Lys-Gly) (interchain with G-Cter in SUMO2) cross-links involve residues Lys-922 and Lys-947. 2 disordered regions span residues Leu-955–Gly-976 and Leu-996–Gly-1041. The span at Ala-1010 to Gly-1023 shows a compositional bias: acidic residues. 2 C2H2-type zinc fingers span residues Ile-1063–His-1086 and His-1091–His-1118. The interval Ser-1107–Asp-1127 is disordered.

As to expression, highly expressed in ovary, testis and kidney. Expressed at moderate levels in skin and small intestine, and at lower levels in lung. Trace amounts of expression detected in liver and colon. Not detected in brain, spleen or thymus.

It localises to the nucleus. In terms of biological role, probable transcription factor specific for skin keratinocytes. May play a role in the differentiation of spermatozoa and oocytes. May also play an important role in early urinary-tract development. The sequence is that of Zinc finger protein basonuclin-2 from Mus musculus (Mouse).